The following is a 210-amino-acid chain: 3-phospho-D-glycerate guanylyltransferase (210 aa).

Belongs to the CofC family.

The enzyme catalyses (2R)-3-phosphoglycerate + GTP + H(+) = 3-[(R)-glyceryl]-diphospho-5'-guanosine + diphosphate. It participates in cofactor biosynthesis; coenzyme F420 biosynthesis. Functionally, guanylyltransferase that catalyzes the activation of (2R)-3-phosphoglycerate (3PG) as 3-[(R)-glyceryl]-diphospho-5'-guanosine, via the condensation of 3PG with GTP. It is involved in the biosynthesis of a derivative of the hydride carrier cofactor coenzyme F420, 3PG-F420. This is 3-phospho-D-glycerate guanylyltransferase from Colwellia psychrerythraea (strain 34H / ATCC BAA-681) (Vibrio psychroerythus).